We begin with the raw amino-acid sequence, 99 residues long: PE family immunomodulator PE35 (99 aa).

Residues 1 to 90 (MEKMSHDPIA…DVARTYSQID (90 aa)) enclose the PE domain.

Belongs to the mycobacterial PE family. As to quaternary structure, interacts with PPE68. PE35/PPE68 complex interacts with human TLR2.

The protein resides in the secreted. Its subcellular location is the cell surface. Its function is as follows. Plays a major role in RD1-associated pathogenesis, and may contribute to the establishment and maintenance of M.tuberculosis infection. Together with PPE68, stimulates the secretion of IL-10 and MCP-1 from human macrophages, via the interaction with human Toll-like receptor 2 (TLR2). The polypeptide is PE family immunomodulator PE35 (PE35) (Mycobacterium tuberculosis (strain ATCC 25618 / H37Rv)).